The primary structure comprises 425 residues: Probable G-protein coupled receptor 63 (425 aa).

The Extracellular segment spans residues 1 to 87; it reads MVVSGVLTAP…VFKSLNLAVQ (87 aa). 3 N-linked (GlcNAc...) asparagine glycosylation sites follow: N22, N34, and N68. Residues 88 to 112 traverse the membrane as a helical segment; the sequence is IILSAIMIFILFVSFLGNLVVCLMV. At 113 to 123 the chain is on the cytoplasmic side; it reads YQKAAMRSAIN. The helical transmembrane segment at 124-148 threads the bilayer; it reads ILLASLAFADMLLAVLNMPFALVTI. Residues 149–165 are Extracellular-facing; that stretch reads LTTRWIFGKFFCRLSAM. The helical transmembrane segment at 166 to 190 threads the bilayer; sequence FFWLFVIEGVAILLIISIDRFLIIV. At 191 to 202 the chain is on the cytoplasmic side; it reads QRQDKLNPYRAK. Residues 203–222 form a helical membrane-spanning segment; sequence VLIAVSWATAFSVAFPLAVG. Over 223–247 the chain is Extracellular; sequence NPDLQIPSRAPQCVFGYTTNSGYQA. Residues 248-272 traverse the membrane as a helical segment; that stretch reads YVILISLISFFIPFLVILYSFMGIL. Topologically, residues 273–321 are cytoplasmic; the sequence is NTLRHNALRIHSYPEGICLSQASKLGLMSLQRPFQMSIDMGFKTRAFTT. Residues 322-345 traverse the membrane as a helical segment; the sequence is ILILFAVFIVCWAPFTTYSLVATF. The Extracellular segment spans residues 346-357; that stretch reads SKHFYYQHNFFE. The helical transmembrane segment at 358–379 threads the bilayer; it reads ISTWLLWLCYLKSALNPLIYYW. The Cytoplasmic portion of the chain corresponds to 380 to 425; the sequence is RIKKFHDACLDMMPKSFKFLPRLPGHTRRRIRPSAVYVCGEHRTVL.

Belongs to the G-protein coupled receptor 1 family. As to expression, brain specific.

The protein localises to the cell membrane. Its function is as follows. Orphan receptor. May play a role in brain function. The polypeptide is Probable G-protein coupled receptor 63 (Gpr63) (Mus musculus (Mouse)).